We begin with the raw amino-acid sequence, 331 residues long: Pectinesterase (331 aa).

Positions 1–17 (MVKSVLASALFAVSALA) are cleaved as a signal peptide. Q139 provides a ligand contact to substrate. The active-site Proton donor is D162. D183 acts as the Nucleophile in catalysis. Substrate is bound by residues R248 and W250.

Belongs to the pectinesterase family.

It localises to the secreted. It catalyses the reaction [(1-&gt;4)-alpha-D-galacturonosyl methyl ester](n) + n H2O = [(1-&gt;4)-alpha-D-galacturonosyl](n) + n methanol + n H(+). The protein operates within glycan metabolism; pectin degradation; 2-dehydro-3-deoxy-D-gluconate from pectin: step 1/5. Functionally, involved in maceration and soft-rotting of plant tissue. This chain is Pectinesterase (pme1), found in Aspergillus aculeatus.